Reading from the N-terminus, the 101-residue chain is Trp operon repressor homolog (101 aa).

A DNA-binding region spans residues 59–82 (QREIQQNLNTSAATITRGSNMIKT).

It belongs to the TrpR family. Homodimer.

Its subcellular location is the cytoplasm. Functionally, this protein is an aporepressor. When complexed with L-tryptophan it binds the operator region of the trp operon and prevents the initiation of transcription. The chain is Trp operon repressor homolog from Haemophilus influenzae (strain 86-028NP).